The chain runs to 137 residues: Ribonuclease VapC51 (137 aa).

In terms of domain architecture, PINc spans Y5–A120. Mg(2+) is bound by residues D8 and D95.

It belongs to the PINc/VapC protein family. It depends on Mg(2+) as a cofactor.

Toxic component of a type II toxin-antitoxin (TA) system. An RNase. Its cognate antitoxin is VapB51. This Mycobacterium tuberculosis (strain ATCC 25618 / H37Rv) protein is Ribonuclease VapC51.